A 470-amino-acid polypeptide reads, in one-letter code: MTTSQLAKKGEAWSARFSEPMSDLVKRYTASVFFDKRLALFDIQGSLAHAAMLAKQGIIAEADRAEIERGMAQIKGEIEAGGFEWKLDLEDVHLNIEARLTALVGDAGKRLHTGRSRNDQVATDIRLWLRSEIDNIIALLGALRGSLLDLADQNADTILPGFTHLQVAQPVTFGHHLLAYVEMFTRDAERMADCRKRVNRLPLGAAALAGTSYPIDREFVAQQLGFDGVCRNSLDAVSDRDFAIEFCAAAALVMTHVSRFSEELVLWMSPRVGFIDIADRFCTGSSIMPQKKNPDVPELARGKTGRVNGHLIGLLTLMKGQPLAYNKDNQEDKEPLFDTVDTVVDTLRIFADMVPGITVKPEAMRAAALQGYATATDLADYLVKKGLPFRDAHEAVAHAVRACDSRNCDLADLTVAELREVSGLGDKSALIGDDVHTVLTLEGSVAARNHIGGTAPDQVRAAIAAARAAL.

It belongs to the lyase 1 family. Argininosuccinate lyase subfamily.

It is found in the cytoplasm. It catalyses the reaction 2-(N(omega)-L-arginino)succinate = fumarate + L-arginine. Its pathway is amino-acid biosynthesis; L-arginine biosynthesis; L-arginine from L-ornithine and carbamoyl phosphate: step 3/3. This Cupriavidus pinatubonensis (strain JMP 134 / LMG 1197) (Cupriavidus necator (strain JMP 134)) protein is Argininosuccinate lyase.